The sequence spans 607 residues: Terpenoid synthase 9 (607 aa).

Residues D356, D360, N501, and D509 each coordinate Mg(2+). Positions 356–360 (DDTFD) match the DDXXD motif motif.

It belongs to the terpene synthase family. Tpsa subfamily. Requires Mg(2+) as cofactor. It depends on Mn(2+) as a cofactor. In terms of tissue distribution, predominantly expressed in roots but also in stems, leaves and flowers.

It is found in the cytoplasm. Its pathway is secondary metabolite biosynthesis; terpenoid biosynthesis. In terms of biological role, involved in terpene biosynthesis in roots. Possesses diterpene (C20) synthase activity in vitro. Does not seem to be involved in sesquiterpene (C15) biosynthesis. The chain is Terpenoid synthase 9 from Arabidopsis thaliana (Mouse-ear cress).